The following is a 411-amino-acid chain: Keratin, type I cytoskeletal 12 (411 aa).

Positions 1–42 (DHDYEFPGIQAFAGLGMGFGGSPGGGSLYLPSGNDGGLLSGS) are head. Residues 43–78 (EKETMQNLNDRLASYLDKVRALEDANAELENKIREW) are coil 1A. Residues 43-359 (EKETMQNLND…RLLDGEAQGD (317 aa)) form the IF rod domain. Positions 83–101 (GHGHGDCGPQHDYSKYHPL) are linker 1. A coil 1B region spans residues 102–193 (IEDLRNKIIS…KNHEEELQSC (92 aa)). The segment at 194 to 216 (RAGGPGEVSVEMDAAPGVDLTRL) is linker 12. Residues 217–354 (LNDMRAQYEA…IETYRRLLDG (138 aa)) form a coil 2 region. The tract at residues 355-411 (EAQGDGLDESSAMTGSRSQAQSIDSSKDPSKTRKIKTIVQEVVNGEVVSSQVQEIQN) is tail. Positions 356–387 (AQGDGLDESSAMTGSRSQAQSIDSSKDPSKTR) are disordered. The span at 365–378 (SAMTGSRSQAQSID) shows a compositional bias: polar residues.

The protein belongs to the intermediate filament family. In terms of assembly, heterotetramer of two type I and two type II keratins. Keratin-3 associates with keratin-12. In terms of tissue distribution, cornea specific. Associated mainly with all layers of the central corneal epithelium and also found in the suprabasal limbal epithelium.

Functionally, involved in corneal epithelium organization, integrity and corneal keratin expression. The sequence is that of Keratin, type I cytoskeletal 12 (KRT12) from Oryctolagus cuniculus (Rabbit).